The chain runs to 550 residues: Arginine--tRNA ligase (550 aa).

The 'HIGH' region motif lies at 123-133; the sequence is ANPTGYLHIAH.

The protein belongs to the class-I aminoacyl-tRNA synthetase family. Monomer.

Its subcellular location is the cytoplasm. It catalyses the reaction tRNA(Arg) + L-arginine + ATP = L-arginyl-tRNA(Arg) + AMP + diphosphate. The chain is Arginine--tRNA ligase from Ureaplasma parvum serovar 3 (strain ATCC 27815 / 27 / NCTC 11736).